A 290-amino-acid chain; its full sequence is Acetyl-coenzyme A carboxylase carboxyl transferase subunit beta (290 aa).

A CoA carboxyltransferase N-terminal domain is found at 28–290 (IMTKCPKCKK…TGGDIEWLQD (263 aa)). Residues cysteine 32, cysteine 35, cysteine 51, and cysteine 54 each coordinate Zn(2+). The C4-type zinc-finger motif lies at 32–54 (CPKCKKIMLTKELDKNMRVCMNC).

The protein belongs to the AccD/PCCB family. In terms of assembly, acetyl-CoA carboxylase is a heterohexamer composed of biotin carboxyl carrier protein (AccB), biotin carboxylase (AccC) and two subunits each of ACCase subunit alpha (AccA) and ACCase subunit beta (AccD). It depends on Zn(2+) as a cofactor.

Its subcellular location is the cytoplasm. It carries out the reaction N(6)-carboxybiotinyl-L-lysyl-[protein] + acetyl-CoA = N(6)-biotinyl-L-lysyl-[protein] + malonyl-CoA. Its pathway is lipid metabolism; malonyl-CoA biosynthesis; malonyl-CoA from acetyl-CoA: step 1/1. With respect to regulation, inhibited by pyrrolidine dione antibiotics moiramide B (CPD1) and CPD2. Functionally, component of the acetyl coenzyme A carboxylase (ACC) complex. Biotin carboxylase (BC) catalyzes the carboxylation of biotin on its carrier protein (BCCP) and then the CO(2) group is transferred by the transcarboxylase to acetyl-CoA to form malonyl-CoA. In Bacillus subtilis (strain 168), this protein is Acetyl-coenzyme A carboxylase carboxyl transferase subunit beta.